Here is a 157-residue protein sequence, read N- to C-terminus: Phosphopantetheine adenylyltransferase (157 aa).

S8 contacts substrate. ATP-binding positions include 8–9 and H16; that span reads SF. 3 residues coordinate substrate: K40, T72, and R86. ATP is bound by residues 87 to 89, E97, and 122 to 128; these read GLR and HSFLSSS.

It belongs to the bacterial CoaD family. In terms of assembly, homohexamer. Mg(2+) serves as cofactor.

The protein localises to the cytoplasm. It catalyses the reaction (R)-4'-phosphopantetheine + ATP + H(+) = 3'-dephospho-CoA + diphosphate. It functions in the pathway cofactor biosynthesis; coenzyme A biosynthesis; CoA from (R)-pantothenate: step 4/5. In terms of biological role, reversibly transfers an adenylyl group from ATP to 4'-phosphopantetheine, yielding dephospho-CoA (dPCoA) and pyrophosphate. The chain is Phosphopantetheine adenylyltransferase from Prochlorococcus marinus (strain MIT 9313).